Here is a 459-residue protein sequence, read N- to C-terminus: Sperm-tail PG-rich repeat-containing protein 2 (459 aa).

STPGR repeat units lie at residues Val-21–Phe-30, Pro-63–Ala-73, Thr-119–Gly-148, Gly-157–Lys-203, Thr-213–Ser-243, Pro-257–Thr-268, Pro-351–Leu-377, Gly-400–Leu-410, and Thr-433–Gln-443.

The polypeptide is Sperm-tail PG-rich repeat-containing protein 2 (STPG2) (Homo sapiens (Human)).